A 431-amino-acid polypeptide reads, in one-letter code: Saglin (431 aa).

An N-terminal signal peptide occupies residues 1 to 39; sequence MSVRDYSGVQVISSRKHRSMSRLPTVLLLLASAAVLAAG. The N-linked (GlcNAc...) asparagine glycan is linked to Asn95. A coiled-coil region spans residues 120–169; the sequence is LDDAQRQMEQEHRQYAATLEEQLHAAQQETQQEQEMKKALQKQLDALTDS.

Homodimer. As to expression, female salivary gland (at protein level). Not detected in female carcass without salivary glands, midgut and hemolymph (at protein level). Probably not expressed in male tissues.

The protein localises to the secreted. Functionally, (Microbial infection) Facilitates efficient midgut colonization by Plasmodium berghei parasites. Promotes successful transmission of Plasmodium berghei at low infection densities. Its function is as follows. (Microbial infection) Facilitates efficient midgut colonization by Plasmodium falciparum. The protein is Saglin of Anopheles coluzzii (African malaria mosquito).